A 177-amino-acid chain; its full sequence is ATP synthase subunit delta, chloroplastic (177 aa).

Belongs to the ATPase delta chain family. F-type ATPases have 2 components, F(1) - the catalytic core - and F(0) - the membrane proton channel. F(1) has five subunits: alpha(3), beta(3), gamma(1), delta(1), epsilon(1). CF(0) has four main subunits: a(1), b(1), b'(1) and c(10-14). The alpha and beta chains form an alternating ring which encloses part of the gamma chain. F(1) is attached to F(0) by a central stalk formed by the gamma and epsilon chains, while a peripheral stalk is formed by the delta, b and b' chains.

The protein resides in the plastid. It localises to the chloroplast thylakoid membrane. F(1)F(0) ATP synthase produces ATP from ADP in the presence of a proton or sodium gradient. F-type ATPases consist of two structural domains, F(1) containing the extramembraneous catalytic core and F(0) containing the membrane proton channel, linked together by a central stalk and a peripheral stalk. During catalysis, ATP synthesis in the catalytic domain of F(1) is coupled via a rotary mechanism of the central stalk subunits to proton translocation. In terms of biological role, this protein is part of the stalk that links CF(0) to CF(1). It either transmits conformational changes from CF(0) to CF(1) or is implicated in proton conduction. The chain is ATP synthase subunit delta, chloroplastic from Galdieria sulphuraria (Red alga).